An 84-amino-acid chain; its full sequence is Alpha-mammal toxin Aah3 (84 aa).

The signal sequence occupies residues 1 to 19 (MNYLVMISLALLLMTGVES). The LCN-type CS-alpha/beta domain occupies 21 to 82 (RDGYIVDSKN…PIKDPSYKCH (62 aa)). 4 cysteine pairs are disulfide-bonded: cysteine 31–cysteine 81, cysteine 35–cysteine 53, cysteine 39–cysteine 63, and cysteine 43–cysteine 65. Residue arginine 84 is a propeptide, removed by a carboxypeptidase.

It belongs to the long (4 C-C) scorpion toxin superfamily. Sodium channel inhibitor family. Alpha subfamily. In terms of tissue distribution, expressed by the venom gland.

Its subcellular location is the secreted. Alpha toxins bind voltage-independently at site-3 of sodium channels (Nav) and inhibit the inactivation of the activated channels, thereby blocking neuronal transmission. This is Alpha-mammal toxin Aah3 from Androctonus australis (Sahara scorpion).